The following is a 460-amino-acid chain: Transcriptional regulatory protein UME1 (460 aa).

Positions 14-22 match the NEE-box motif; the sequence is NEEFKIWKK. WD repeat units follow at residues 233–271, 276–316, 339–379, and 411–451; these read PGIKNIQEIKFLNNQIFATCSDDGIIRFWGNEIGKKPLW, SLDG…ALGD, FYSE…AIYN, and GENN…VLDG.

In terms of assembly, component of the RPD3C(L) complex composed of at least ASH1, CTI6, DEP1, PHO23, RPD3, RXT2, RXT3, SAP30, SDS3, SIN3, UME1 and UME6. Component of the RPD3C(S) complex composed of at least EAF3, RCO1, RPD3, SIN3, and UME1. Interacts with RPD3.

It is found in the cytoplasm. The protein localises to the nucleus. Its function is as follows. Catalytic component of the RPD3 histone deacetylase complexes RPD3C(L) and RPD3C(S) responsible for the deacetylation of lysine residues on the N-terminal part of the core histones (H2A, H2B, H3 and H4). Histone deacetylation gives a tag for epigenetic repression and plays an important role in transcriptional regulation, cell cycle progression and developmental events. This is Transcriptional regulatory protein UME1 (UME1) from Saccharomyces cerevisiae (strain ATCC 204508 / S288c) (Baker's yeast).